Consider the following 92-residue polypeptide: UPF0213 protein MGAS9429_Spy1198 (92 aa).

The region spanning 4–80 (KKAYMYVLEC…KRKTRSQKLA (77 aa)) is the GIY-YIG domain.

Belongs to the UPF0213 family.

This Streptococcus pyogenes serotype M12 (strain MGAS9429) protein is UPF0213 protein MGAS9429_Spy1198.